A 369-amino-acid chain; its full sequence is DNA replication and repair protein RecF (369 aa).

Residue 30 to 37 (GENGQGKT) coordinates ATP.

The protein belongs to the RecF family.

Its subcellular location is the cytoplasm. In terms of biological role, the RecF protein is involved in DNA metabolism; it is required for DNA replication and normal SOS inducibility. RecF binds preferentially to single-stranded, linear DNA. It also seems to bind ATP. The polypeptide is DNA replication and repair protein RecF (Anaeromyxobacter sp. (strain Fw109-5)).